A 1085-amino-acid chain; its full sequence is Activating transcription factor 7-interacting protein 1 (1085 aa).

Disordered regions lie at residues 1–22, 47–109, 127–245, 329–381, 469–499, 517–560, 650–843, 889–910, and 932–975; these read MDNT…RASD, GKHE…VNVT, LGSN…NTDS, PNKS…VHSK, AAKE…ANAN, RNVG…TSSP, ASTN…TTIH, NSVR…QTGS, and GAPQ…ANTS. Positions 54-64 are enriched in polar residues; the sequence is SDLNSPLSNTD. Composition is skewed to basic and acidic residues over residues 82-91 and 133-150; these read SEIKRPESRA and NFHE…RESD. Composition is skewed to polar residues over residues 151–165 and 173–182; these read TPSG…NSFS and NDITIISNSP. 2 stretches are compositionally biased toward basic and acidic residues: residues 347–379 and 469–479; these read EREV…DSVH and AAKEDMKKKQE. A coiled-coil region spans residues 446–480; sequence NKRHKTVLTELQAKITRLTKRFGAAKEDMKKKQEN. 3 stretches are compositionally biased toward low complexity: residues 487–499, 529–547, and 651–666; these read SSGK…ANAN, APVS…TPAS, and STNT…VSSP. Residues 667–717 show a composition bias toward polar residues; it reads GVQRNSPASAGSVRTTLAVQAVSTTHPVAQTTRTSLPTVGTSGLHNSTSSR. Positions 732 to 743 are enriched in low complexity; that stretch reads TAPTEPPTITAP. Polar residues-rich tracts occupy residues 746-775, 792-810, and 830-843; these read ENQT…VTGS, SSQA…AQSI, and TGVP…TTIH. Positions 950–968 are enriched in pro residues; sequence PRPVHPAPLPEAPQPPRLP. One can recognise a Fibronectin type-III domain in the interval 976 to 1082; the sequence is LPQKPQLKLA…DPQSTDVISS (107 aa).

Belongs to the MCAF family.

The protein localises to the nucleus. Functionally, recruiter that couples transcriptional factors to general transcription apparatus and thereby modulates transcription regulation and chromatin formation. Can both act as an activator or a repressor depending on the context. Mediates MBD1-dependent transcriptional repression, probably by recruiting complexes containing histone methyltransferase activity. May belong to a complex that represses transcription and couples DNA methylation and histone H3 'Lys-9' trimethylation (H3K9me3). The protein is Activating transcription factor 7-interacting protein 1 (ATF7IP) of Gallus gallus (Chicken).